Reading from the N-terminus, the 285-residue chain is Pseudouridine-5'-phosphate glycosidase (285 aa).

E17 (proton donor) is an active-site residue. Substrate contacts are provided by K77 and V97. D126 contributes to the Mn(2+) binding site. 128–130 (SQD) is a substrate binding site. The active-site Nucleophile is the K147.

The protein belongs to the pseudouridine-5'-phosphate glycosidase family. Homotrimer. Requires Mn(2+) as cofactor.

It carries out the reaction D-ribose 5-phosphate + uracil = psi-UMP + H2O. Functionally, catalyzes the reversible cleavage of pseudouridine 5'-phosphate (PsiMP) to ribose 5-phosphate and uracil. Functions biologically in the cleavage direction, as part of a pseudouridine degradation pathway. The polypeptide is Pseudouridine-5'-phosphate glycosidase (Thermotoga maritima (strain ATCC 43589 / DSM 3109 / JCM 10099 / NBRC 100826 / MSB8)).